The chain runs to 187 residues: Interferon alpha-1/2 (187 aa).

The first 23 residues, methionine 1–alanine 23, serve as a signal peptide directing secretion. Cystine bridges form between cysteine 24/cysteine 122 and cysteine 52/cysteine 160. The N-linked (GlcNAc...) asparagine glycan is linked to asparagine 101.

It belongs to the alpha/beta interferon family.

It is found in the secreted. Functionally, produced by macrophages, IFN-alpha have antiviral activities. Interferon stimulates the production of two enzymes: a protein kinase and an oligoadenylate synthetase. This Canis lupus familiaris (Dog) protein is Interferon alpha-1/2.